The following is a 471-amino-acid chain: tRNA-2-methylthio-N(6)-dimethylallyladenosine synthase (471 aa).

In terms of domain architecture, MTTase N-terminal spans 31-149 (LYYHIETYGC…FPQLLWEALN (119 aa)). Residues Cys-40, Cys-76, Cys-110, Cys-186, Cys-190, and Cys-193 each contribute to the [4Fe-4S] cluster site. The 231-residue stretch at 172–402 (RDSNLKAWVN…IELQNKISLE (231 aa)) folds into the Radical SAM core domain. The TRAM domain maps to 405–468 (AELRGKIVEV…AWTMQGELVE (64 aa)).

It belongs to the methylthiotransferase family. MiaB subfamily. Monomer. The cofactor is [4Fe-4S] cluster.

The protein localises to the cytoplasm. It carries out the reaction N(6)-dimethylallyladenosine(37) in tRNA + (sulfur carrier)-SH + AH2 + 2 S-adenosyl-L-methionine = 2-methylsulfanyl-N(6)-dimethylallyladenosine(37) in tRNA + (sulfur carrier)-H + 5'-deoxyadenosine + L-methionine + A + S-adenosyl-L-homocysteine + 2 H(+). Catalyzes the methylthiolation of N6-(dimethylallyl)adenosine (i(6)A), leading to the formation of 2-methylthio-N6-(dimethylallyl)adenosine (ms(2)i(6)A) at position 37 in tRNAs that read codons beginning with uridine. The sequence is that of tRNA-2-methylthio-N(6)-dimethylallyladenosine synthase from Thermoanaerobacter sp. (strain X514).